The following is a 547-amino-acid chain: Chaperonin GroEL (547 aa).

ATP is bound by residues 30 to 33 (TLGP), Lys51, 87 to 91 (DGTTT), Gly415, and Asp496.

This sequence belongs to the chaperonin (HSP60) family. As to quaternary structure, forms a cylinder of 14 subunits composed of two heptameric rings stacked back-to-back. Interacts with the co-chaperonin GroES.

It is found in the cytoplasm. It carries out the reaction ATP + H2O + a folded polypeptide = ADP + phosphate + an unfolded polypeptide.. Its function is as follows. Together with its co-chaperonin GroES, plays an essential role in assisting protein folding. The GroEL-GroES system forms a nano-cage that allows encapsulation of the non-native substrate proteins and provides a physical environment optimized to promote and accelerate protein folding. This is Chaperonin GroEL from Actinobacillus pleuropneumoniae serotype 5b (strain L20).